The chain runs to 270 residues: Putative F-box protein At3g24700 (270 aa).

The F-box domain occupies 1 to 45 (MLTDLPLDLESEILSRVPATSLQRLKTTCKRWYALFRDPRFVKKN).

This Arabidopsis thaliana (Mouse-ear cress) protein is Putative F-box protein At3g24700.